A 531-amino-acid polypeptide reads, in one-letter code: CTP synthase (531 aa).

Positions 1-265 (MAKYIFITGG…DRIITERLNL (265 aa)) are amidoligase domain. Serine 13 contributes to the CTP binding site. UTP is bound at residue serine 13. Residue 14 to 19 (SLGKGI) participates in ATP binding. An L-glutamine-binding site is contributed by tyrosine 54. Aspartate 71 is a binding site for ATP. 2 residues coordinate Mg(2+): aspartate 71 and glutamate 139. Residues 146–148 (DIE), 186–191 (KTKPTQ), and lysine 222 each bind CTP. Residues 186–191 (KTKPTQ) and lysine 222 contribute to the UTP site. Residues 290–529 (NVALVGKYVE…IRACLEYKRK (240 aa)) form the Glutamine amidotransferase type-1 domain. Glycine 349 lines the L-glutamine pocket. Cysteine 376 functions as the Nucleophile; for glutamine hydrolysis in the catalytic mechanism. Residues 377 to 380 (LGMQ), glutamate 400, and arginine 457 each bind L-glutamine. Residues histidine 502 and glutamate 504 contribute to the active site.

It belongs to the CTP synthase family. In terms of assembly, homotetramer.

The enzyme catalyses UTP + L-glutamine + ATP + H2O = CTP + L-glutamate + ADP + phosphate + 2 H(+). It carries out the reaction L-glutamine + H2O = L-glutamate + NH4(+). It catalyses the reaction UTP + NH4(+) + ATP = CTP + ADP + phosphate + 2 H(+). It participates in pyrimidine metabolism; CTP biosynthesis via de novo pathway; CTP from UDP: step 2/2. Its activity is regulated as follows. Allosterically activated by GTP, when glutamine is the substrate; GTP has no effect on the reaction when ammonia is the substrate. The allosteric effector GTP functions by stabilizing the protein conformation that binds the tetrahedral intermediate(s) formed during glutamine hydrolysis. Inhibited by the product CTP, via allosteric rather than competitive inhibition. Functionally, catalyzes the ATP-dependent amination of UTP to CTP with either L-glutamine or ammonia as the source of nitrogen. Regulates intracellular CTP levels through interactions with the four ribonucleotide triphosphates. The sequence is that of CTP synthase from Aquifex aeolicus (strain VF5).